The following is a 271-amino-acid chain: 5-deoxy-glucuronate isomerase (271 aa).

Belongs to the isomerase IolB family.

It carries out the reaction 5-deoxy-D-glucuronate = 5-dehydro-2-deoxy-D-gluconate. It functions in the pathway polyol metabolism; myo-inositol degradation into acetyl-CoA; acetyl-CoA from myo-inositol: step 4/7. Its function is as follows. Involved in the isomerization of 5-deoxy-glucuronate (5DG) to 5-dehydro-2-deoxy-D-gluconate (DKG or 2-deoxy-5-keto-D-gluconate). The chain is 5-deoxy-glucuronate isomerase from Bacillus licheniformis (strain ATCC 14580 / DSM 13 / JCM 2505 / CCUG 7422 / NBRC 12200 / NCIMB 9375 / NCTC 10341 / NRRL NRS-1264 / Gibson 46).